A 531-amino-acid chain; its full sequence is Peptide chain release factor 3 (531 aa).

Residues Ser-13–Met-282 enclose the tr-type G domain. Residues Ser-22–Thr-29, Asp-90–His-94, and Asn-144–Asp-147 contribute to the GTP site.

This sequence belongs to the TRAFAC class translation factor GTPase superfamily. Classic translation factor GTPase family. PrfC subfamily.

The protein resides in the cytoplasm. Functionally, increases the formation of ribosomal termination complexes and stimulates activities of RF-1 and RF-2. It binds guanine nucleotides and has strong preference for UGA stop codons. It may interact directly with the ribosome. The stimulation of RF-1 and RF-2 is significantly reduced by GTP and GDP, but not by GMP. The sequence is that of Peptide chain release factor 3 from Vibrio cholerae serotype O1 (strain ATCC 39541 / Classical Ogawa 395 / O395).